Consider the following 313-residue polypeptide: Peroxidase 57 (313 aa).

The N-terminal stretch at 1–22 is a signal peptide; the sequence is MMKGAKFSSLLVLFFIFPIAFA. Cystine bridges form between Cys33-Cys109, Cys66-Cys71, Cys115-Cys309, and Cys192-Cys224. His64 functions as the Proton acceptor in the catalytic mechanism. Ca(2+)-binding residues include Asp65, Val68, Gly70, Asp72, and Ser74. Substrate is bound at residue Pro155. His185 contacts heme b. Ca(2+) is bound at residue Thr186. Positions 233, 236, and 241 each coordinate Ca(2+).

The protein belongs to the peroxidase family. Classical plant (class III) peroxidase subfamily. Requires heme b as cofactor. The cofactor is Ca(2+). As to expression, mainly expressed in roots.

Its subcellular location is the secreted. The enzyme catalyses 2 a phenolic donor + H2O2 = 2 a phenolic radical donor + 2 H2O. Functionally, removal of H(2)O(2), oxidation of toxic reductants, biosynthesis and degradation of lignin, suberization, auxin catabolism, response to environmental stresses such as wounding, pathogen attack and oxidative stress. These functions might be dependent on each isozyme/isoform in each plant tissue. The chain is Peroxidase 57 (PER57) from Arabidopsis thaliana (Mouse-ear cress).